A 256-amino-acid chain; its full sequence is Acetyl-coenzyme A carboxylase carboxyl transferase subunit alpha (256 aa).

The 236-residue stretch at 1–236 (MTDVARILKE…RSHLIDEITQ (236 aa)) folds into the CoA carboxyltransferase C-terminal domain.

This sequence belongs to the AccA family. As to quaternary structure, acetyl-CoA carboxylase is a heterohexamer composed of biotin carboxyl carrier protein (AccB), biotin carboxylase (AccC) and two subunits each of ACCase subunit alpha (AccA) and ACCase subunit beta (AccD).

The protein resides in the cytoplasm. It catalyses the reaction N(6)-carboxybiotinyl-L-lysyl-[protein] + acetyl-CoA = N(6)-biotinyl-L-lysyl-[protein] + malonyl-CoA. The protein operates within lipid metabolism; malonyl-CoA biosynthesis; malonyl-CoA from acetyl-CoA: step 1/1. Component of the acetyl coenzyme A carboxylase (ACC) complex. First, biotin carboxylase catalyzes the carboxylation of biotin on its carrier protein (BCCP) and then the CO(2) group is transferred by the carboxyltransferase to acetyl-CoA to form malonyl-CoA. The chain is Acetyl-coenzyme A carboxylase carboxyl transferase subunit alpha from Streptococcus equi subsp. zooepidemicus (strain MGCS10565).